The following is a 153-amino-acid chain: Iron-sulfur cluster assembly scaffold protein IscU 1 (153 aa).

[2Fe-2S] cluster is bound by residues Cys-33, Cys-58, His-101, and Cys-102.

Belongs to the NifU family. Forms a heterotetramer with IscS2.

Functionally, a scaffold on which IscS assembles Fe-S clusters. Subsequently gives the nascent cluster to other proteins. It is likely that Fe-S cluster coordination is flexible as the role of this complex is to build and then hand off Fe-S clusters. The sequence is that of Iron-sulfur cluster assembly scaffold protein IscU 1 (iscU1) from Archaeoglobus fulgidus (strain ATCC 49558 / DSM 4304 / JCM 9628 / NBRC 100126 / VC-16).